The chain runs to 103 residues: MSFKLFIKNLPTNLCCGLIHIYRWTISPLLGSPCRFFPTCSQYALQALKHHGCIKGLGLTIKRIGKCGPWHPGGVDLVPMTTLEEALDISPAVDDDESCDLHA.

It belongs to the UPF0161 family.

Its subcellular location is the cell inner membrane. Functionally, could be involved in insertion of integral membrane proteins into the membrane. This chain is Putative membrane protein insertion efficiency factor, found in Chlamydia caviae (strain ATCC VR-813 / DSM 19441 / 03DC25 / GPIC) (Chlamydophila caviae).